The primary structure comprises 358 residues: Fructose-bisphosphate aldolase class 2 (358 aa).

Position 61 (serine 61) interacts with D-glyceraldehyde 3-phosphate. Aspartate 109 (proton donor) is an active-site residue. Zn(2+)-binding residues include histidine 110, aspartate 144, glutamate 174, and histidine 226. Glycine 227 is a binding site for dihydroxyacetone phosphate. Histidine 264 lines the Zn(2+) pocket. Dihydroxyacetone phosphate contacts are provided by residues glycine 265–serine 267 and asparagine 286–threonine 289.

The protein belongs to the class II fructose-bisphosphate aldolase family. Zn(2+) serves as cofactor.

It carries out the reaction beta-D-fructose 1,6-bisphosphate = D-glyceraldehyde 3-phosphate + dihydroxyacetone phosphate. Its pathway is carbohydrate degradation; glycolysis; D-glyceraldehyde 3-phosphate and glycerone phosphate from D-glucose: step 4/4. Its function is as follows. Catalyzes the aldol condensation of dihydroxyacetone phosphate (DHAP or glycerone-phosphate) with glyceraldehyde 3-phosphate (G3P) to form fructose 1,6-bisphosphate (FBP) in gluconeogenesis and the reverse reaction in glycolysis. In Buchnera aphidicola subsp. Acyrthosiphon pisum (strain APS) (Acyrthosiphon pisum symbiotic bacterium), this protein is Fructose-bisphosphate aldolase class 2 (fbaA).